Here is a 66-residue protein sequence, read N- to C-terminus: Large ribosomal subunit protein bL35 (66 aa).

The tract at residues 25 to 45 (QAAGKRHGMSKRPQKMKRNAR) is disordered. A compositionally biased stretch (basic residues) spans 28–44 (GKRHGMSKRPQKMKRNA).

Belongs to the bacterial ribosomal protein bL35 family.

The protein is Large ribosomal subunit protein bL35 of Rhodospirillum centenum (strain ATCC 51521 / SW).